The following is a 107-amino-acid chain: Hydrogenase expression/formation protein HoxL (107 aa).

Belongs to the HupF/HypC family.

In Cupriavidus necator (strain ATCC 17699 / DSM 428 / KCTC 22496 / NCIMB 10442 / H16 / Stanier 337) (Ralstonia eutropha), this protein is Hydrogenase expression/formation protein HoxL (hoxL).